The sequence spans 329 residues: Strigolactones hydrolase CXE15 (329 aa).

The Involved in the stabilization of the negatively charged intermediate by the formation of the oxyanion hole motif lies at 83–85 (HGG). The (-)-2'-epi-GR24 site is built by glycine 85, glycine 86, serine 169, and serine 170. The active-site Nucleophile is the serine 169. Active-site residues include glutamate 271 and histidine 302.

It belongs to the 'GDXG' lipolytic enzyme family. Expressed in axillary buds, leaves, stems, hypocotyls, flowers, siliques, and vasculatures of shoots and roots.

Its subcellular location is the nucleus. The protein resides in the cytoplasm. It localises to the cytosol. It catalyses the reaction (-)-2'-epi-GR24 + H2O = (-)-2'-epi-GR24 ABC-rings + 5-hydroxy-3-methylfuran-2(5H)-one. The enzyme catalyses 5-deoxystrigol + H2O = 5-deoxystrigol ABC-rings + 5-hydroxy-3-methylfuran-2(5H)-one. It carries out the reaction orobanchol + H2O = orobanchol ABC-rings + 5-hydroxy-3-methylfuran-2(5H)-one. Binds to strigolactones (SLs) such as (-)-2'-epi-GR24(4DO), 5-deoxystrigol (5DS) and orobanchol, and catalyzes their hydrolysis; SL are phytohormones controlling shoot branching and communications between plants and microorganisms. Promotes shoot branching by dampening SL-inhibited axillary bud outgrowth. In Arabidopsis thaliana (Mouse-ear cress), this protein is Strigolactones hydrolase CXE15.